Reading from the N-terminus, the 283-residue chain is 4-diphosphocytidyl-2-C-methyl-D-erythritol kinase (283 aa).

Residue Lys12 is part of the active site. 94–104 (PAQAGLGGGSS) is an ATP binding site. Asp136 is a catalytic residue.

This sequence belongs to the GHMP kinase family. IspE subfamily.

It catalyses the reaction 4-CDP-2-C-methyl-D-erythritol + ATP = 4-CDP-2-C-methyl-D-erythritol 2-phosphate + ADP + H(+). It functions in the pathway isoprenoid biosynthesis; isopentenyl diphosphate biosynthesis via DXP pathway; isopentenyl diphosphate from 1-deoxy-D-xylulose 5-phosphate: step 3/6. Catalyzes the phosphorylation of the position 2 hydroxy group of 4-diphosphocytidyl-2C-methyl-D-erythritol. In Acidovorax sp. (strain JS42), this protein is 4-diphosphocytidyl-2-C-methyl-D-erythritol kinase.